The following is a 357-amino-acid chain: DNA integrity scanning protein DisA (357 aa).

One can recognise a DAC domain in the interval 3-141; the sequence is RPTLRETVAR…GGERHVVADS (139 aa). Residues Gly70, Leu88, and 101–105 contribute to the ATP site; that span reads TRHRS.

The protein belongs to the DisA family. As to quaternary structure, homooctamer. The cofactor is Mg(2+).

It catalyses the reaction 2 ATP = 3',3'-c-di-AMP + 2 diphosphate. Participates in a DNA-damage check-point. DisA forms globular foci that rapidly scan along the chromosomes searching for lesions. In terms of biological role, also has diadenylate cyclase activity, catalyzing the condensation of 2 ATP molecules into cyclic di-AMP (c-di-AMP). c-di-AMP likely acts as a signaling molecule that may couple DNA integrity with a cellular process. The sequence is that of DNA integrity scanning protein DisA from Mycolicibacterium paratuberculosis (strain ATCC BAA-968 / K-10) (Mycobacterium paratuberculosis).